The following is a 4644-amino-acid chain: Cytoplasmic dynein 1 heavy chain 1 (4644 aa).

At Ser-2 the chain carries N-acetylserine. The segment at 2 to 1865 (SETGGGEDGS…SIQMANAKFN (1864 aa)) is stem. 4 coiled-coil regions span residues 48-69 (AALE…FLSD), 179-200 (SVEK…NIEI), 453-476 (AHRK…QLRA), and 541-564 (TEAW…RITA). Ser-68 bears the Phosphoserine mark. The tract at residues 446-701 (MVWRINPAHR…NTQEIFDDWA (256 aa)) is interaction with DYNC1I2. The segment at 649–800 (AKQIDRQLTA…EKVEERNTIS (152 aa)) is interaction with DYNC1LI2. Lys-1123 bears the N6-acetyllysine mark. Residues 1169 to 1201 (TYVQSLKRKIKQFEKQVELYRNGQRLLEKQRFQ) are a coiled coil. Ser-1228 carries the phosphoserine modification. Coiled-coil stretches lie at residues 1229-1250 (AIQQ…AVES) and 1355-1371 (RKLR…LKNF). AAA regions lie at residues 1866 to 2097 (YGFE…VLVS), 2178 to 2450 (EELK…LTRL), 2554 to 2803 (EVET…WVRG), and 2897 to 3166 (VFYE…GGRT). Residues 1904–1911 (GPAGTGKT) and 2222–2229 (GPSGSGKS) each bind ATP. Residues 2389–2409 (EDEAQRRRKGKEDEGEEAASP) form a disordered region. ATP is bound by residues 2593-2600 (GPPGSGKT) and 2935-2942 (GVSGAGKT). Coiled-coil stretches lie at residues 3187–3273 (EKRS…ADKQ), 3394–3498 (AIAQ…KNQM), and 3735–3798 (EFQL…VSQQ). The tract at residues 3187 to 3498 (EKRSELEEQQ…KTSETFKNQM (312 aa)) is stalk. Lys-3478 bears the N6-acetyllysine mark. AAA stretches follow at residues 3551-3780 (LSNA…EVTR) and 4003-4219 (AHMF…TVDT). The residue at position 4160 (Ser-4160) is a Phosphoserine. An N6-acetyllysine modification is found at Lys-4281. Thr-4364 bears the Phosphothreonine mark.

This sequence belongs to the dynein heavy chain family. Homodimer. The cytoplasmic dynein 1 complex consists of two catalytic heavy chains (HCs) and a number of non-catalytic subunits presented by intermediate chains (ICs), light intermediate chains (LICs) and light chains (LCs); the composition seems to vary in respect to the IC, LIC and LC composition. The heavy chain homodimer serves as a scaffold for the probable homodimeric assembly of the respective non-catalytic subunits. The ICs and LICs bind directly to the HC dimer and dynein LCs assemble on the IC dimer. Interacts with DYNC1LI1; DYNC1LI1 and DYNC1LI2 bind mutually exclusive to DYNC1H1. Interacts with DYNC1LI2; DYNC1LI1 and DYNC1LI2 bind mutually exclusive to DYNC1H1. Interacts with DYNC1I2. Interacts with BICD2. Interacts with DNALI1.

Its subcellular location is the cytoplasm. The protein localises to the cytoskeleton. Its function is as follows. Cytoplasmic dynein 1 acts as a motor for the intracellular retrograde motility of vesicles and organelles along microtubules. Dynein has ATPase activity; the force-producing power stroke is thought to occur on release of ADP. Plays a role in mitotic spindle assembly and metaphase plate congression. This Rattus norvegicus (Rat) protein is Cytoplasmic dynein 1 heavy chain 1 (Dync1h1).